Here is a 459-residue protein sequence, read N- to C-terminus: Endoglucanase EG-1 (459 aa).

An N-terminal signal peptide occupies residues 1 to 22; the sequence is MAPSVTLPLTTAILAIARLVAA. At glutamine 23 the chain carries Pyrrolidone carboxylic acid. The catalytic stretch occupies residues 23-397; that stretch reads QQPGTSTPEV…DIGSTTNSTA (375 aa). Intrachain disulfides connect cysteine 41–cysteine 47, cysteine 71–cysteine 92, cysteine 82–cysteine 88, cysteine 161–cysteine 360, cysteine 193–cysteine 216, cysteine 197–cysteine 215, cysteine 236–cysteine 241, and cysteine 246–cysteine 315. A glycan (N-linked (GlcNAc) asparagine) is linked at asparagine 78. N-linked (GlcNAc...) (high mannose) asparagine glycosylation is present at asparagine 204. Glutamate 218 serves as the catalytic Nucleophile. Glutamate 223 acts as the Proton donor/acceptor in catalysis. The interval 390–425 is disordered; it reads GSTTNSTAPPPPPASSTTFSTTRRSSTTSSSPSCTQ. Asparagine 394 carries an N-linked (GlcNAc...) asparagine glycan. Residues 398–423 are linker; sequence PPPPPASSTTFSTTRRSSTTSSSPSC. A compositionally biased stretch (low complexity) spans 404 to 425; that stretch reads SSTTFSTTRRSSTTSSSPSCTQ. Cystine bridges form between cysteine 423–cysteine 439, cysteine 431–cysteine 448, and cysteine 442–cysteine 458. In terms of domain architecture, CBM1 spans 423–459; the sequence is CTQTHWGQCGGIGYSGCKTCTSGTTCQYSNDYYSQCL.

This sequence belongs to the glycosyl hydrolase 7 (cellulase C) family. Asn-204 contains mainly a high-mannose-type glycan (Hex(7-9)GlcNAc(2)), with a small fraction (8%) bearing a single GlcNAc at this site.

Its subcellular location is the secreted. It catalyses the reaction Endohydrolysis of (1-&gt;4)-beta-D-glucosidic linkages in cellulose, lichenin and cereal beta-D-glucans.. Its function is as follows. Endoglucanase (EG) that cleaves the internal beta-1,4-glucosidic bonds in cellulose. The degradation of cellulose involves an interplay between different cellulolytic enzymes. Hydrolysis starts with EGs, which cut internal glycosidic linkages to reduce the polymerization degree of the substrate and creates new chain ends for exocellobiohydrolases (CBHs). The CBH release the disaccharide cellobiose from the non-reducing end of the cellulose polymer chain. Finally, beta-1,4-glucosidases hydrolyze the cellobiose and other short cello-oligosaccharides into glucose units. This is Endoglucanase EG-1 (egl1) from Hypocrea jecorina (Trichoderma reesei).